The chain runs to 179 residues: Interleukin-10 (179 aa).

A signal peptide spans 1 to 19 (MPSSSALLCCLVFLAGVAA). Cystine bridges form between C31/C127 and C81/C133. Residue N135 is glycosylated (N-linked (GlcNAc...) asparagine).

It belongs to the IL-10 family. Homodimer. Interacts with IL10RA and IL10RB.

The protein resides in the secreted. Functionally, major immune regulatory cytokine that acts on many cells of the immune system where it has profound anti-inflammatory functions, limiting excessive tissue disruption caused by inflammation. Mechanistically, IL10 binds to its heterotetrameric receptor comprising IL10RA and IL10RB leading to JAK1 and STAT2-mediated phosphorylation of STAT3. In turn, STAT3 translocates to the nucleus where it drives expression of anti-inflammatory mediators. Targets antigen-presenting cells (APCs) such as macrophages and monocytes and inhibits their release of pro-inflammatory cytokines including granulocyte-macrophage colony-stimulating factor /GM-CSF, granulocyte colony-stimulating factor/G-CSF, IL-1 alpha, IL-1 beta, IL-6, IL-8 and TNF-alpha. Also interferes with antigen presentation by reducing the expression of MHC-class II and co-stimulatory molecules, thereby inhibiting their ability to induce T cell activation. In addition, controls the inflammatory response of macrophages by reprogramming essential metabolic pathways including mTOR signaling. This is Interleukin-10 (IL10) from Bubalus carabanensis (Swamp type water buffalo).